The sequence spans 357 residues: Probable dual-specificity RNA methyltransferase RlmN (357 aa).

The Proton acceptor role is filled by Glu92. Positions 98–336 constitute a Radical SAM core domain; the sequence is HKYGLSVCVT…CGVRLEHGTD (239 aa). A disulfide bridge connects residues Cys105 and Cys341. Cys112, Cys116, and Cys119 together coordinate [4Fe-4S] cluster. Residues 164 to 165, Ser196, 219 to 221, and Asn297 each bind S-adenosyl-L-methionine; these read GE and SLH. Cys341 (S-methylcysteine intermediate) is an active-site residue.

This sequence belongs to the radical SAM superfamily. RlmN family. The cofactor is [4Fe-4S] cluster.

It is found in the cytoplasm. It catalyses the reaction adenosine(2503) in 23S rRNA + 2 reduced [2Fe-2S]-[ferredoxin] + 2 S-adenosyl-L-methionine = 2-methyladenosine(2503) in 23S rRNA + 5'-deoxyadenosine + L-methionine + 2 oxidized [2Fe-2S]-[ferredoxin] + S-adenosyl-L-homocysteine. The enzyme catalyses adenosine(37) in tRNA + 2 reduced [2Fe-2S]-[ferredoxin] + 2 S-adenosyl-L-methionine = 2-methyladenosine(37) in tRNA + 5'-deoxyadenosine + L-methionine + 2 oxidized [2Fe-2S]-[ferredoxin] + S-adenosyl-L-homocysteine. Its function is as follows. Specifically methylates position 2 of adenine 2503 in 23S rRNA and position 2 of adenine 37 in tRNAs. This Exiguobacterium sibiricum (strain DSM 17290 / CCUG 55495 / CIP 109462 / JCM 13490 / 255-15) protein is Probable dual-specificity RNA methyltransferase RlmN.